The chain runs to 2948 residues: MGNENSTSDNQRTLSAQTPRSAQPPGNSQNIKRKQQDTPGSPDHRDASSIGSVGLGGFCTASESSASLDPCLVSPEVTEPRKDPQGARGPEGSLLPSPPPSQEREHPSSSMPFAECPPEGCLASPAAAPEDGPQTQSPRREPAPNAPGDIAAAFPAERDSSTPYQEIAAVPSAGRERQPKEEGQKSSFSFSSGIDQSPGMSPVPLREPMKAPLCGEGDQPGGFESQEKEAAGGFPPAESRQGVASVQVTPEAPAAAQQGTESSAVLEKSPLKPMAPIPQDPAPRASDRERGQGEAPPQYLTDDLEFLRACHLPRSNSGAAPEAEVNAASQESCQQPVGAYLPHAELPWGLPSPALVPEAGGSGKEALDTIDVQGHPQTGMRGTKPNQVVCVAAGGQPEGGLPVSPEPSLLTPTEEAHPASSLASFPAAQIPIAVEEPGSSSRESVSKAGMPVSADAAKEVVDAGLVGLERQVSDLGSKGEHPEGDPGEVPAPSPQERGEHLNTEQSHEVQPGVPPPPLPKEQSHEVQPGAPPPPLPKAPSESARGPPGPTDGAKVHEDSTSPAVAKEGSRSPGDSPGGKEEAPEPPDGGDPGNLQGEDSQAFSSKRDPEVGKDELSKPSSDAESRDHPSSHSAQPPRKGGAGHTDGPHSQTAEADASGLPHKLGEEDPVLPPVPDGAGEPTVPEGAIWEGSGLQPKCPDTLQSREGLGRMESFLTLESEKSDFPPTPVAEVAPKAQEGESTLEIRKMGSCDGEGLLTSPDQPRGPACDASRQEFHAGVPHPPQGENLAADLGLTALILDQDQQGIPSCPGEGWIRGAASEWPLLSSEKHLQPSQAQPETSIFDVLKEQAQPPENGKETSPSHPGFKDQGADSSQIHVPVEPQEDNNLPTHGGQEQALGSELQSQLPKGTLSDTPTSSPTDMVWESSLTEESELSAPTRQKLPALGEKRPEGACGDGQSSRVSPPAADVLKDFSLAGNFSRKETCCTGQGPNKSQQALADALEEGSQHEEACQRHPGASEAADGCSPLWGLSKREMASGNTGEAPPCQPDSVALLDAVPCLPALAPASPGVTPTQDAPETEACDETQEGRQQPVPAPQQKMECWATSDAESPKLLASFPSAGEQGGEAGAAETGGSAGAGDPGKQQAPEKPGEATLSCGLLQTEHCLTSGEEASTSALRESCQAEHPMASCQDALLPARELGGIPRSTMDFSTHQAVPDPKELLLSGPPEVAAPDTPYLHVDSAAQRGAEDSGVKAVSSADPRAPGESPCPVGEPPLALENAASLKLFAGSLAPLLQPGAAGGEIPAVQASSGSPKARTTEGPVDSMPCLDRMPLLAKGKQATGEEKAATAPGAGAKASGEGMAGDAAGETEGSMERMGEPSQDPKQGTSGGVDTSSEQIATLTGFPDFREHIAKIFEKPVLGALATPGEKAGAGRSAVGKDLTRPLGPEKLLDGPPGVDVTLLPAPPARLQVEKKQQLAGEAEISHLALQDPASDKLLGPAGLTWERNLPGAGVGKEMAGVPPTLREDERPEGPGAAWPGLEGQAYSQLERSRQELASGLPSPAATQELPVERAAAFQVAPHSHGEEAVAQDRIPSGKQHQETSACDSPHGEDGPGDFAHTGVPGHVPRSTCAPSPQREVLTVPEANSEPWTLDTLGGERRPGVTAGILEMRNALGNQSTPAPPTGEVADTPLEPGKVAGAAGEAEGDITLSTAETQACASGDLPEAGTTRTFSVVAGDLVLPGSCQDPACSDKAPGMEGTAALHGDSPARPQQAKEQPGPERPIPAGDGKVCVSSPPEPDETHDPKLQHLAPEELHTDRESPRPGPSMLPSVPKKDAPRVMDKVTSDETRGAEGTESSPVADDIIQPAAPADLESPTLAASSYHGDVVGQVSTDLIAQSISPAAAHAGLPPSAAEHIVSPSAPAGDRVEASTPSCPDPAKDLSRSSDSEEAFETPESTTPVKAPPAPPPPPPEVIPEPEVSTQPPPEEPGCGSETVPVPDGPRSDSVEGSPFRPPSHSFSAVFDEDKPIASSGTYNLDFDNIELVDTFQTLEPRASDAKNQEGKVNTRRKSTDSVPISKSTLSRSLSLQASDFDGASSSGNPEAVALAPDAYSTGSSSASSTLKRTKKPRPPSLKKKQTTKKPTETPPVKETQQEPDEESLVPSGENLASETKTESAKTEGPSPALLEETPLEPAVGPKAACPLDSESAEGVVPPASGGGRVQNSPPVGRKTLPLTTAPEAGEVTPSDSGGQEDSPAKGLSVRLEFDYSEDKSSWDNQQENPPPTKKIGKKPVAKMPLRRPKMKKTPEKLDNTPASPPRSPAEPNDIPIAKGTYTFDIDKWDDPNFNPFSSTSKMQESPKLPQQSYNFDPDTCDESVDPFKTSSKTPSSPSKSPASFEIPASAMEANGVDGDGLNKPAKKKKTPLKTDTFRVKKSPKRSPLSDPPSQDPTPAATPETPPVISAVVHATDEEKLAVTNQKWTCMTVDLEADKQDYPQPSDLSTFVNETKFSSPTEELDYRNSYEIEYMEKIGSSLPQDDDAPKKQALYLMFDTSQESPVKSSPVRMSESPTPCSGSSFEETEALVNTAAKNQHPVPRGLAPNQESHLQVPEKSSQKELEAMGLGTPSEAIEITAPEGSFASADALLSRLAHPVSLCGALDYLEPDLAEKNPPLFAQKLQEELEFAIMRIEALKLARQIALASRSHQDAKREAAHPTDVSISKTALYSRIGTAEVEKPAGLLFQQPDLDSALQIARAEIITKEREVSEWKDKYEESRREVMEMRKIVAEYEKTIAQMIEDEQREKSVSHQTVQQLVLEKEQALADLNSVEKSLADLFRRYEKMKEVLEGFRKNEEVLKRCAQEYLSRVKKEEQRYQALKVHAEEKLDRANAEIAQVRGKAQQEQAAHQASLRKEQLRVDALERTLEQKNKEIEELTKICDELIAKMGKS.

Over residues 1–30 the composition is skewed to polar residues; the sequence is MGNENSTSDNQRTLSAQTPRSAQPPGNSQN. Disordered stretches follow at residues 1–304, 314–333, 392–453, 465–785, 825–964, 985–1050, 1062–1154, 1243–1274, 1296–1400, 1427–1463, 1493–1661, 1675–1705, 1741–1878, 1907–2035, and 2052–2460; these read MGNE…TDDL, RSNS…QESC, AAGG…MPVS, LVGL…PQGE, SSEK…VSPP, CTGQ…QPDS, ALAP…GEAT, AAQR…VGEP, QPGA…EQIA, PGEK…VTLL, ASDK…GERR, LGNQ…AGEA, VLPG…ESPT, HAGL…SSGT, and LEPR…ETPP. Over residues 174-184 the composition is skewed to basic and acidic residues; that stretch reads GRERQPKEEGQ. Residues Ser197, Ser201, and Ser269 each carry the phosphoserine modification. Val325 carries the phosphothreonine modification. Ser493 carries the post-translational modification Phosphoserine. Positions 496 to 507 are enriched in basic and acidic residues; that stretch reads ERGEHLNTEQSH. 3 positions are modified to phosphoserine: Ser561, Ser571, and Ser575. Positions 604–629 are enriched in basic and acidic residues; sequence SKRDPEVGKDELSKPSSDAESRDHPS. Ser758 carries the phosphoserine modification. The span at 911 to 926 shows a compositional bias: low complexity; sequence SDTPTSSPTDMVWESS. Phosphoserine is present on Ser962. The segment covering 985–996 has biased composition (polar residues); that stretch reads CTGQGPNKSQQA. At Ser1025 the chain carries Phosphoserine. Phosphoserine is present on residues Ser1267 and Ser1313. The segment covering 1348 to 1357 has biased composition (low complexity); the sequence is ATAPGAGAKA. The span at 1383-1400 shows a compositional bias: polar residues; sequence DPKQGTSGGVDTSSEQIA. A Phosphoserine modification is found at Ser1562. Composition is skewed to basic and acidic residues over residues 1801 to 1823 and 1834 to 1854; these read DETH…RESP and PKKD…RGAE. Residues 1862 to 1873 are compositionally biased toward low complexity; sequence ADDIIQPAAPAD. Residues 1939 to 1948 show a composition bias toward basic and acidic residues; it reads PAKDLSRSSD. Over residues 1963 to 1976 the composition is skewed to pro residues; that stretch reads KAPPAPPPPPPEVI. A Phosphoserine modification is found at Ser2072. Residues 2074–2102 are compositionally biased toward polar residues; the sequence is DSVPISKSTLSRSLSLQASDFDGASSSGN. Over residues 2114-2124 the composition is skewed to low complexity; sequence STGSSSASSTL. Positions 2125–2141 are enriched in basic residues; the sequence is KRTKKPRPPSLKKKQTT. 2 positions are modified to phosphoserine: Ser2161 and Ser2226. Thr2246 is modified (phosphothreonine). Ser2256 carries the phosphoserine modification. A compositionally biased stretch (basic and acidic residues) spans 2265-2275; sequence LEFDYSEDKSS. The span at 2288–2305 shows a compositional bias: basic residues; that stretch reads KIGKKPVAKMPLRRPKMK. One can recognise an SPAZ domain in the interval 2315–2403; that stretch reads PASPPRSPAE…SPASFEIPAS (89 aa). A phosphoserine mark is found at Ser2317, Ser2321, Ser2359, Ser2389, Ser2392, Ser2394, and Ser2403. The span at 2348-2368 shows a compositional bias: polar residues; that stretch reads NPFSSTSKMQESPKLPQQSYN. Low complexity predominate over residues 2382 to 2395; the sequence is KTSSKTPSSPSKSP. 4 positions are modified to phosphothreonine: Thr2430, Thr2451, Thr2455, and Thr2458. A phosphoserine mark is found at Ser2512 and Ser2534. Thr2553 carries the phosphothreonine modification. The segment at 2555–2577 is disordered; the sequence is QESPVKSSPVRMSESPTPCSGSS. Ser2557 and Ser2569 each carry phosphoserine. Residues 2568-2577 are compositionally biased toward polar residues; the sequence is ESPTPCSGSS. The residue at position 2625 (Thr2625) is a Phosphothreonine. 2 coiled-coil regions span residues 2675–2703 and 2746–2947; these read AQKL…LASR and DLDS…KMGK.

The protein belongs to the TACC family. As to quaternary structure, interacts with CCDC100/CEP120. Interacts with microtubules. Interacts with YEATS4, GCN5L2 and PCAF. Post-translationally, phosphorylated by TTK; which is required for localization in centrosome. As to expression, strongly expressed in heart, skeletal muscle, brain, prostate, thyroid and trachea.

The protein resides in the cytoplasm. It is found in the nucleus. The protein localises to the cytoskeleton. Its subcellular location is the microtubule organizing center. It localises to the centrosome. In terms of biological role, plays a role in the microtubule-dependent coupling of the nucleus and the centrosome. Involved in the processes that regulate centrosome-mediated interkinetic nuclear migration (INM) of neural progenitors. May play a role in organizing centrosomal microtubules. May act as a tumor suppressor protein. May represent a tumor progression marker. The protein is Transforming acidic coiled-coil-containing protein 2 (TACC2) of Homo sapiens (Human).